The primary structure comprises 413 residues: Serine hydroxymethyltransferase (413 aa).

(6S)-5,6,7,8-tetrahydrofolate-binding positions include leucine 115 and 119 to 121 (GHL). Lysine 224 is modified (N6-(pyridoxal phosphate)lysine).

This sequence belongs to the SHMT family. Homodimer. Pyridoxal 5'-phosphate serves as cofactor.

It localises to the cytoplasm. It carries out the reaction (6R)-5,10-methylene-5,6,7,8-tetrahydrofolate + glycine + H2O = (6S)-5,6,7,8-tetrahydrofolate + L-serine. It functions in the pathway one-carbon metabolism; tetrahydrofolate interconversion. It participates in amino-acid biosynthesis; glycine biosynthesis; glycine from L-serine: step 1/1. In terms of biological role, catalyzes the reversible interconversion of serine and glycine with tetrahydrofolate (THF) serving as the one-carbon carrier. This reaction serves as the major source of one-carbon groups required for the biosynthesis of purines, thymidylate, methionine, and other important biomolecules. Also exhibits THF-independent aldolase activity toward beta-hydroxyamino acids, producing glycine and aldehydes, via a retro-aldol mechanism. The protein is Serine hydroxymethyltransferase of Mycoplasma mycoides subsp. mycoides SC (strain CCUG 32753 / NCTC 10114 / PG1).